The primary structure comprises 256 residues: Imidazole glycerol phosphate synthase subunit HisF (256 aa).

Residues Asp12 and Asp131 contribute to the active site.

Belongs to the HisA/HisF family. Heterodimer of HisH and HisF.

The protein localises to the cytoplasm. The enzyme catalyses 5-[(5-phospho-1-deoxy-D-ribulos-1-ylimino)methylamino]-1-(5-phospho-beta-D-ribosyl)imidazole-4-carboxamide + L-glutamine = D-erythro-1-(imidazol-4-yl)glycerol 3-phosphate + 5-amino-1-(5-phospho-beta-D-ribosyl)imidazole-4-carboxamide + L-glutamate + H(+). It functions in the pathway amino-acid biosynthesis; L-histidine biosynthesis; L-histidine from 5-phospho-alpha-D-ribose 1-diphosphate: step 5/9. Its function is as follows. IGPS catalyzes the conversion of PRFAR and glutamine to IGP, AICAR and glutamate. The HisF subunit catalyzes the cyclization activity that produces IGP and AICAR from PRFAR using the ammonia provided by the HisH subunit. The polypeptide is Imidazole glycerol phosphate synthase subunit HisF (Azotobacter vinelandii (strain DJ / ATCC BAA-1303)).